Reading from the N-terminus, the 741-residue chain is ABC transporter D family member 2 (741 aa).

3 consecutive transmembrane segments (helical) span residues 39–59, 119–139, and 260–280; these read GSLG…FSLV, FLSL…SVSI, and VVVM…VSGF. Residues 131–409 form the ABC transmembrane type-1 domain; that stretch reads ARTMLSVSIA…LMVALSQAIG (279 aa). One can recognise an ABC transporter domain in the interval 518–740; sequence IKFENVSIVS…DDDHLKKPLS (223 aa). 551–558 is a binding site for ATP; sequence GPNGSGKS.

This sequence belongs to the ABC transporter superfamily. ABCD family. Peroxisomal fatty acyl CoA transporter (TC 3.A.1.203) subfamily.

Its subcellular location is the membrane. This is ABC transporter D family member 2 (abcD2) from Dictyostelium discoideum (Social amoeba).